A 657-amino-acid polypeptide reads, in one-letter code: UvrABC system protein B (657 aa).

The region spanning 25-163 (ASIKNGNKYQ…QGMVLFLEIN (139 aa)) is the Helicase ATP-binding domain. Residue 38–45 (GVTGSGKT) participates in ATP binding. The short motif at 91 to 114 (YYDYYQPEAYIPRQDLFIEKDSSI) is the Beta-hairpin element. The DEAD box signature appears at 130–133 (LSFD). The Helicase C-terminal domain maps to 433–599 (QVEILYDMAK…SVSRNVEESL (167 aa)). Positions 622–657 (AKIVKDLRKQMMEAADKLEFEKAAALRDEIKKMRKL) constitute a UVR domain.

The protein belongs to the UvrB family. Forms a heterotetramer with UvrA during the search for lesions. Interacts with UvrC in an incision complex.

It localises to the cytoplasm. Functionally, the UvrABC repair system catalyzes the recognition and processing of DNA lesions. A damage recognition complex composed of 2 UvrA and 2 UvrB subunits scans DNA for abnormalities. Upon binding of the UvrA(2)B(2) complex to a putative damaged site, the DNA wraps around one UvrB monomer. DNA wrap is dependent on ATP binding by UvrB and probably causes local melting of the DNA helix, facilitating insertion of UvrB beta-hairpin between the DNA strands. Then UvrB probes one DNA strand for the presence of a lesion. If a lesion is found the UvrA subunits dissociate and the UvrB-DNA preincision complex is formed. This complex is subsequently bound by UvrC and the second UvrB is released. If no lesion is found, the DNA wraps around the other UvrB subunit that will check the other stand for damage. This Campylobacter hominis (strain ATCC BAA-381 / DSM 21671 / CCUG 45161 / LMG 19568 / NCTC 13146 / CH001A) protein is UvrABC system protein B.